The following is a 508-amino-acid chain: p-aminobenzoyl-glutamate transport protein (508 aa).

The next 13 helical transmembrane spans lie at 30-50, 85-105, 121-139, 140-159, 164-184, 211-231, 261-281, 303-323, 343-363, 382-402, 405-425, 439-459, and 479-499; these read FLLFIYLIIVLMVTTAILSAF, FSGFAPLGAILALVLGAGLAE, VNARYASYMVLFIAFFSHI, SSDAALVIMPPMGALIFLAV, VAGLLAAIAGVGCGFTANLLI, IDNWYFMASSVVVLTIVGGLI, GLRIAGVVSLLFIAAIALMVI, GIVPLIILFFFVVSLAYGIAT, MAGFIVMVFPLAQFVAMFNWS, LSGIPAFVGLALLSSFLCMFI, GSAIWSILAPIFVPMFMLLGF, SSVLPLAPVSPFVPLFLGFLQ, and LIFLVVWLLMLLAWYLVGLPI.

It is found in the cell inner membrane. It catalyses the reaction N-(4-aminobenzoyl)-L-glutamate(in) + H(+)(in) = N-(4-aminobenzoyl)-L-glutamate(out) + H(+)(out). Its activity is regulated as follows. Completely inhibited by 100 nM sodium azide and by the proton ionophore carbonyl cyanide m-chlorophenylhydrazone (CCCP). Is also strongly inhibited by 100 mM potassium fluoride. In terms of biological role, essential for aminobenzoyl-glutamate utilization. It catalyzes the concentration-dependent uptake of p-aminobenzoyl-glutamate (PABA-GLU) into the cell and allows accumulation of PABA-GLU to a concentration enabling AbgAB to catalyze cleavage into p-aminobenzoate and glutamate. It also seems to increase the sensitivity to low levels of aminobenzoyl-glutamate. May actually serve physiologically as a transporter for some other molecule, perhaps a dipeptide, and that it transports p-aminobenzoyl-glutamate as a secondary activity. The physiological role of abgABT should be clarified. The polypeptide is p-aminobenzoyl-glutamate transport protein (Escherichia coli (strain K12)).